The primary structure comprises 384 residues: Carbamoyl phosphate synthase small chain (384 aa).

The interval 1–192 (MIKKIPAILV…LADRNREKIY (192 aa)) is CPSase. Ser51, Gly244, and Gly246 together coordinate L-glutamine. One can recognise a Glutamine amidotransferase type-1 domain in the interval 196–382 (KVIVIDFGVK…IEIMKQFRKE (187 aa)). Cys272 functions as the Nucleophile in the catalytic mechanism. L-glutamine-binding residues include Met273, Gln276, Asn312, Gly314, and Phe315. Active-site residues include His355 and Glu357.

This sequence belongs to the CarA family. Composed of two chains; the small (or glutamine) chain promotes the hydrolysis of glutamine to ammonia, which is used by the large (or ammonia) chain to synthesize carbamoyl phosphate. Tetramer of heterodimers (alpha,beta)4.

The protein resides in the plastid. It is found in the chloroplast. It carries out the reaction hydrogencarbonate + L-glutamine + 2 ATP + H2O = carbamoyl phosphate + L-glutamate + 2 ADP + phosphate + 2 H(+). It catalyses the reaction L-glutamine + H2O = L-glutamate + NH4(+). It participates in amino-acid biosynthesis; L-arginine biosynthesis; carbamoyl phosphate from bicarbonate: step 1/1. The protein operates within pyrimidine metabolism; UMP biosynthesis via de novo pathway; (S)-dihydroorotate from bicarbonate: step 1/3. Its function is as follows. Small subunit of the glutamine-dependent carbamoyl phosphate synthetase (CPSase). CPSase catalyzes the formation of carbamoyl phosphate from the ammonia moiety of glutamine, carbonate, and phosphate donated by ATP, constituting the first step of 2 biosynthetic pathways, one leading to arginine and/or urea and the other to pyrimidine nucleotides. The small subunit (glutamine amidotransferase) binds and cleaves glutamine to supply the large subunit with the substrate ammonia. This is Carbamoyl phosphate synthase small chain from Porphyra purpurea (Red seaweed).